The following is a 295-amino-acid chain: Oxidoreductase AN1597 (295 aa).

This sequence belongs to the asaB hydroxylase/desaturase family.

It participates in secondary metabolite biosynthesis; terpenoid biosynthesis. Oxidoreductase; part of the gene cluster that mediates the biosynthesis of the diterpene ent-pimara-8(14),15-diene (PD). Within the cluster, the HMG-CoA reductase AN1593 functions in the mevalonate pathway, which produces isoprenoid precursors. The geranylgeranyl pyrophosphate (GGPP) synthase AN1592 is needed in the formation of GGPP, the precursor for diterpenes. Lastly, the pimaradiene synthase pbcA performs the 2 cyclization steps that convert GGPP to ent-pimara-8(14),15-diene. The putative roles of the remaining cluster enzymes in ent-pimara-8(14),15-diene biosynthesis is unclear. The cytochrome P450 monooxygenase AN1598, the glutathione S-transferase AN1595, the oxidoreductases AN1596 and AN1597 probably function as decorative enzymes. It is possible that in biological conditions the compound is oxidized to ent-pimara-8(14),15-dien-19-oic acid, which is a bioactive diterpene compound predominant in many plant extracts. In Emericella nidulans (strain FGSC A4 / ATCC 38163 / CBS 112.46 / NRRL 194 / M139) (Aspergillus nidulans), this protein is Oxidoreductase AN1597.